The following is a 358-amino-acid chain: Putative zinc metalloprotease BH06270 (358 aa).

Histidine 7 lines the Zn(2+) pocket. Residue glutamate 8 is part of the active site. Position 11 (histidine 11) interacts with Zn(2+). A run of 3 helical transmembrane segments spans residues 89–111 (ATVF…FFFF), 282–304 (FLSL…LFPI), and 332–354 (IIFR…NDYF). The 76-residue stretch at 102–177 (TVVILTFFFF…IEFKMERSGQ (76 aa)) folds into the PDZ domain.

This sequence belongs to the peptidase M50B family. It depends on Zn(2+) as a cofactor.

The protein localises to the cell inner membrane. In Bartonella henselae (strain ATCC 49882 / DSM 28221 / CCUG 30454 / Houston 1) (Rochalimaea henselae), this protein is Putative zinc metalloprotease BH06270.